A 56-amino-acid polypeptide reads, in one-letter code: Large ribosomal subunit protein bL33 (56 aa).

Belongs to the bacterial ribosomal protein bL33 family.

The polypeptide is Large ribosomal subunit protein bL33 (Orientia tsutsugamushi (strain Ikeda) (Rickettsia tsutsugamushi)).